Consider the following 491-residue polypeptide: Ketol-acid reductoisomerase (NADP(+)) (491 aa).

The KARI N-terminal Rossmann domain occupies 15–208; the sequence is AQLGKCRFMA…GGHRAGVLES (194 aa). Residues 45–48, Arg-68, Arg-76, Ser-78, and 108–110 contribute to the NADP(+) site; these read CGAQ and DKQ. The active site involves His-132. Gly-158 lines the NADP(+) pocket. KARI C-terminal knotted domains follow at residues 209-344 and 345-484; these read SFVA…NAPQ and FEGK…MTDM. Mg(2+) contacts are provided by Asp-217, Glu-221, Glu-389, and Glu-393. Substrate is bound at residue Ser-414.

Belongs to the ketol-acid reductoisomerase family. Requires Mg(2+) as cofactor.

It catalyses the reaction (2R)-2,3-dihydroxy-3-methylbutanoate + NADP(+) = (2S)-2-acetolactate + NADPH + H(+). The catalysed reaction is (2R,3R)-2,3-dihydroxy-3-methylpentanoate + NADP(+) = (S)-2-ethyl-2-hydroxy-3-oxobutanoate + NADPH + H(+). It participates in amino-acid biosynthesis; L-isoleucine biosynthesis; L-isoleucine from 2-oxobutanoate: step 2/4. The protein operates within amino-acid biosynthesis; L-valine biosynthesis; L-valine from pyruvate: step 2/4. Functionally, involved in the biosynthesis of branched-chain amino acids (BCAA). Catalyzes an alkyl-migration followed by a ketol-acid reduction of (S)-2-acetolactate (S2AL) to yield (R)-2,3-dihydroxy-isovalerate. In the isomerase reaction, S2AL is rearranged via a Mg-dependent methyl migration to produce 3-hydroxy-3-methyl-2-ketobutyrate (HMKB). In the reductase reaction, this 2-ketoacid undergoes a metal-dependent reduction by NADPH to yield (R)-2,3-dihydroxy-isovalerate. This chain is Ketol-acid reductoisomerase (NADP(+)), found in Serratia proteamaculans (strain 568).